The following is a 563-amino-acid chain: Lipase 2 (563 aa).

Residues 1–19 (MVSKSLFLAAAVNLAGVLA) form the signal peptide. Residue Q20 is modified to Pyrrolidone carboxylic acid. Residues C80 and C124 are joined by a disulfide bond. The Acyl-ester intermediate role is filled by S236. C295 and C307 are disulfide-bonded. A glycan (N-linked (GlcNAc...) asparagine) is linked at N302. Residue E373 is the Charge relay system of the active site. N383 is a glycosylation site (N-linked (GlcNAc...) asparagine). The active-site Charge relay system is the H482.

Belongs to the type-B carboxylesterase/lipase family. In terms of assembly, monomer.

The protein resides in the secreted. It carries out the reaction a triacylglycerol + H2O = a diacylglycerol + a fatty acid + H(+). Hydrolyzes all ester bonds in triglyceride and displays a high affinity for triolein. For unsaturated substrates having long fatty acyl chains (C18:2 cis-9, cis-12 and C18:3 cis-9, cis-12, cis-15) GCL I shows higher specific activity than GCL II, whereas GCL II shows higher specific activity against saturated substrates having short fatty acid chains (C8, C10, C12 and C14). The polypeptide is Lipase 2 (LIP2) (Geotrichum candidum (Oospora lactis)).